The chain runs to 253 residues: MLLKGKTAVISGAASKRGIGRATAELFASHGARVAILDINADEAKAAAGDLPPVEHGAHIGLRCDVADRASCTSASDEVLSAFGVANILINNAGITQPVKTLDISDADWQRIVAVNMTGVLNLSQVFIPNMRQNGGGSIACMSSVSAQRGGGIFGGPHYSAAKAGVLGLAKAMAREFGPDSIRVNCVTPGLIQTDITGDKLSAEMRADIVKGIPLSRLGDARDVANIYLFLASDLSAYVTGAVIDVNGGMLIH.

An NADP(+)-binding site is contributed by 10–35 (ISGAASKRGIGRATAELFASHGARVA). Ser144 lines the substrate pocket. The active-site Proton acceptor is the Tyr159.

The protein belongs to the short-chain dehydrogenases/reductases (SDR) family.

This is an uncharacterized protein from Sinorhizobium fredii (strain NBRC 101917 / NGR234).